Here is a 221-residue protein sequence, read N- to C-terminus: Transmembrane emp24 domain-containing protein 3 (221 aa).

The first 25 residues, 1–25 (MVHEAPHASSFQMLLQLLLLLLLRA), serve as a signal peptide directing secretion. Residues 28–184 (LRSAELTFEL…RAEDLNSRVS (157 aa)) are Lumenal-facing. The GOLD domain occupies 42-124 (KQCFHEEVEQ…HKTVYFDFQV (83 aa)). Dimethylated arginine is present on Arg103. A helical transmembrane segment spans residues 185–205 (YWSVGETIALFVVSFSQVLLL). The Cytoplasmic portion of the chain corresponds to 206 to 221 (KSFFTEKRPVNRAVHS). Residues 208–209 (FF) carry the COPII vesicle coat-binding motif. Positions 208–221 (FFTEKRPVNRAVHS) match the COPI vesicle coat-binding motif.

The protein belongs to the EMP24/GP25L family. In terms of assembly, monomer in endoplasmic reticulum, endoplasmic reticulum-Golgi intermediate compartment and cis-Golgi network. Interacts (via C-terminus) with COPG1; the interaction involves dimeric TMED3; however, there are conflicting reports on the interaction. Interacts with GORASP1 and GORASP2.

It localises to the endoplasmic reticulum-Golgi intermediate compartment membrane. The protein localises to the golgi apparatus. Its subcellular location is the cis-Golgi network membrane. The protein resides in the golgi stack membrane. It is found in the endoplasmic reticulum membrane. It localises to the cytoplasmic vesicle. The protein localises to the COPI-coated vesicle membrane. In terms of biological role, potential role in vesicular protein trafficking, mainly in the early secretory pathway. Contributes to the coupled localization of TMED2 and TMED10 in the cis-Golgi network. This is Transmembrane emp24 domain-containing protein 3 (Tmed3) from Mus musculus (Mouse).